Here is a 90-residue protein sequence, read N- to C-terminus: uncharacterized protein (90 aa).

The protein belongs to the barstar family.

This is an uncharacterized protein from Escherichia coli O157:H7.